The sequence spans 122 residues: MDYEFKKNILDGHYYCHCSMDHEIVGRWVQEEIGKESTKIAQVLALIVAARSNPTEELCLNGTEISLMICGDEVTVQDNALLHSYELEAESEFELYDCESVACCGLEDFEQLIQQWQLFVRR.

Belongs to the UPF0231 family.

This Vibrio vulnificus (strain CMCP6) protein is UPF0231 protein VV1_1657.